A 446-amino-acid polypeptide reads, in one-letter code: Chromosomal replication initiator protein DnaA (446 aa).

Residues 1-81 form a domain I, interacts with DnaA modulators region; sequence MENISDLWNS…AKLAIRFIIP (81 aa). Residues 81 to 109 form a domain II region; the sequence is PQSQAEEDIDLPPVKPNPAQDDSAHLPQS. A domain III, AAA+ region region spans residues 110–326; it reads MLNPKYTFDT…GALIRVVAYS (217 aa). ATP is bound by residues G154, G156, K157, and T158. The segment at 327–446 is domain IV, binds dsDNA; it reads SLINKDINAD…QVEEINGILK (120 aa).

Belongs to the DnaA family. Oligomerizes as a right-handed, spiral filament on DNA at oriC.

Its subcellular location is the cytoplasm. Functionally, plays an essential role in the initiation and regulation of chromosomal replication. ATP-DnaA binds to the origin of replication (oriC) to initiate formation of the DNA replication initiation complex once per cell cycle. Binds the DnaA box (a 9 base pair repeat at the origin) and separates the double-stranded (ds)DNA. Forms a right-handed helical filament on oriC DNA; dsDNA binds to the exterior of the filament while single-stranded (ss)DNA is stabiized in the filament's interior. The ATP-DnaA-oriC complex binds and stabilizes one strand of the AT-rich DNA unwinding element (DUE), permitting loading of DNA polymerase. After initiation quickly degrades to an ADP-DnaA complex that is not apt for DNA replication. Binds acidic phospholipids. This Bacillus cereus (strain B4264) protein is Chromosomal replication initiator protein DnaA.